A 1045-amino-acid polypeptide reads, in one-letter code: Cation efflux system protein CusA (1045 aa).

The next 12 membrane-spanning stretches (helical) occupy residues 14–34 (FLVLMGALFLSIWGTWTIINT), 336–356 (LSGKLLEEFIVVAVVCALFLW), 361–381 (ALVAIISLPLGLCIAFIVMHF), 388–408 (IMSLGGIAIAVGAMVDAAIVM), 444–464 (VGPALFISLLIITLSFIPIFT), 483–503 (AMAGAALLAIVVIPILMGYWI), 530–550 (VLHWPKTTLLVAALSVLTVLW), 869–889 (KLKLMVPMTLMIIFVLLYLAF), 896–916 (LLIISSVPFALVGGIWLLWWM), 926–946 (TGFIALAGVAAEFGVVMLMYL), 983–1003 (AMTVAVIIAGLLPILWGTGAG), and 1010–1030 (IAAPMIGGMITAPLLSLFIIP).

Belongs to the resistance-nodulation-cell division (RND) (TC 2.A.6) family. In terms of assembly, the cus efflux system is composed of CusA, CusB, CusC and CusF.

Its subcellular location is the cell inner membrane. Part of a cation efflux system that mediates resistance to copper and silver. This Escherichia coli O157:H7 protein is Cation efflux system protein CusA (cusA).